The following is a 133-amino-acid chain: Fluoride-specific ion channel FluC (133 aa).

4 helical membrane passes run 12 to 32 (LAMT…ASLI), 41 to 61 (WGTL…LVWL), 76 to 96 (IVGV…CLVF), and 104 to 124 (MIGI…FAGA). Positions 81 and 84 each coordinate Na(+).

Belongs to the fluoride channel Fluc/FEX (TC 1.A.43) family.

It localises to the cell inner membrane. It catalyses the reaction fluoride(in) = fluoride(out). Its activity is regulated as follows. Na(+) is not transported, but it plays an essential structural role and its presence is essential for fluoride channel function. Fluoride-specific ion channel. Important for reducing fluoride concentration in the cell, thus reducing its toxicity. This is Fluoride-specific ion channel FluC from Xanthomonas axonopodis pv. citri (strain 306).